We begin with the raw amino-acid sequence, 340 residues long: Manganese-dependent ADP-ribose/CDP-alcohol diphosphatase (340 aa).

M1 is subject to N-acetylmethionine. 7 residues coordinate Zn(2+): D25, Q27, D74, N110, H241, H278, and H280.

This sequence belongs to the ADPRibase-Mn family. Monomer. The cofactor is Mg(2+).

The catalysed reaction is CDP-choline + H2O = phosphocholine + CMP + 2 H(+). The enzyme catalyses ADP-D-ribose + H2O = D-ribose 5-phosphate + AMP + 2 H(+). It carries out the reaction CDP-glycerol + H2O = sn-glycerol 3-phosphate + CMP + 2 H(+). Functionally, hydrolyzes ADP-ribose, IDP-ribose, CDP-glycerol, CDP-choline and CDP-ethanolamine, but not other non-reducing ADP-sugars or CDP-glucose. May be involved in immune cell signaling as suggested by the second-messenger role of ADP-ribose, which activates TRPM2 as a mediator of oxidative/nitrosative stress. This Mus musculus (Mouse) protein is Manganese-dependent ADP-ribose/CDP-alcohol diphosphatase (Adprm).